We begin with the raw amino-acid sequence, 282 residues long: 4-diphosphocytidyl-2-C-methyl-D-erythritol kinase (282 aa).

Residue lysine 9 is part of the active site. Position 98–108 (98–108 (PMGGGLGGGSS)) interacts with ATP. Residue aspartate 140 is part of the active site.

It belongs to the GHMP kinase family. IspE subfamily. In terms of assembly, homodimer.

It carries out the reaction 4-CDP-2-C-methyl-D-erythritol + ATP = 4-CDP-2-C-methyl-D-erythritol 2-phosphate + ADP + H(+). It functions in the pathway isoprenoid biosynthesis; isopentenyl diphosphate biosynthesis via DXP pathway; isopentenyl diphosphate from 1-deoxy-D-xylulose 5-phosphate: step 3/6. Its function is as follows. Catalyzes the phosphorylation of the position 2 hydroxy group of 4-diphosphocytidyl-2C-methyl-D-erythritol. The sequence is that of 4-diphosphocytidyl-2-C-methyl-D-erythritol kinase from Salmonella heidelberg (strain SL476).